Here is a 361-residue protein sequence, read N- to C-terminus: tRNA 2-selenouridine synthase (361 aa).

A Rhodanese domain is found at 12-135; that stretch reads VLKNIPLIDV…FRRYLIDHLE (124 aa). Cys95 acts as the S-selanylcysteine intermediate in catalysis.

It belongs to the SelU family. Monomer.

It carries out the reaction 5-methylaminomethyl-2-thiouridine(34) in tRNA + selenophosphate + (2E)-geranyl diphosphate + H2O + H(+) = 5-methylaminomethyl-2-selenouridine(34) in tRNA + (2E)-thiogeraniol + phosphate + diphosphate. It catalyses the reaction 5-methylaminomethyl-2-thiouridine(34) in tRNA + (2E)-geranyl diphosphate = 5-methylaminomethyl-S-(2E)-geranyl-thiouridine(34) in tRNA + diphosphate. The catalysed reaction is 5-methylaminomethyl-S-(2E)-geranyl-thiouridine(34) in tRNA + selenophosphate + H(+) = 5-methylaminomethyl-2-(Se-phospho)selenouridine(34) in tRNA + (2E)-thiogeraniol. The enzyme catalyses 5-methylaminomethyl-2-(Se-phospho)selenouridine(34) in tRNA + H2O = 5-methylaminomethyl-2-selenouridine(34) in tRNA + phosphate. Functionally, involved in the post-transcriptional modification of the uridine at the wobble position (U34) of tRNA(Lys), tRNA(Glu) and tRNA(Gln). Catalyzes the conversion of 2-thiouridine (S2U-RNA) to 2-selenouridine (Se2U-RNA). Acts in a two-step process involving geranylation of 2-thiouridine (S2U) to S-geranyl-2-thiouridine (geS2U) and subsequent selenation of the latter derivative to 2-selenouridine (Se2U) in the tRNA chain. This is tRNA 2-selenouridine synthase from Hydrogenovibrio crunogenus (strain DSM 25203 / XCL-2) (Thiomicrospira crunogena).